The sequence spans 124 residues: Small ribosomal subunit protein uS12 (124 aa).

D89 carries the 3-methylthioaspartic acid modification. The disordered stretch occupies residues 103–124; that stretch reads DTAGVKDRRQSRSKYGAKSPKE.

Belongs to the universal ribosomal protein uS12 family. In terms of assembly, part of the 30S ribosomal subunit. Contacts proteins S8 and S17. May interact with IF1 in the 30S initiation complex.

Its function is as follows. With S4 and S5 plays an important role in translational accuracy. Functionally, interacts with and stabilizes bases of the 16S rRNA that are involved in tRNA selection in the A site and with the mRNA backbone. Located at the interface of the 30S and 50S subunits, it traverses the body of the 30S subunit contacting proteins on the other side and probably holding the rRNA structure together. The combined cluster of proteins S8, S12 and S17 appears to hold together the shoulder and platform of the 30S subunit. The polypeptide is Small ribosomal subunit protein uS12 (Prochlorococcus marinus (strain NATL2A)).